A 90-amino-acid chain; its full sequence is Mitochondrial import inner membrane translocase subunit Tim8 A (90 aa).

Residues 36–59 (CWEKCMDKPGPKLDSRTEVCFVNC) carry the Twin CX3C motif motif. 2 disulfide bridges follow: cysteine 36–cysteine 59 and cysteine 40–cysteine 55.

It belongs to the small Tim family. Heterohexamer; composed of 3 copies of TIMM8A and 3 copies of TIMM13, named soluble 70 kDa complex. Associates with the TIM22 complex, whose core is composed of TIMM22.

Its subcellular location is the mitochondrion inner membrane. Its function is as follows. Mitochondrial intermembrane chaperone that participates in the import and insertion of some multi-pass transmembrane proteins into the mitochondrial inner membrane. Also required for the transfer of beta-barrel precursors from the TOM complex to the sorting and assembly machinery (SAM complex) of the outer membrane. Acts as a chaperone-like protein that protects the hydrophobic precursors from aggregation and guide them through the mitochondrial intermembrane space. The TIMM8-TIMM13 complex mediates the import of some proteins while the predominant TIMM9-TIMM10 70 kDa complex mediates the import of much more proteins. This is Mitochondrial import inner membrane translocase subunit Tim8 A (timm8a) from Danio rerio (Zebrafish).